Consider the following 89-residue polypeptide: Small ribosomal subunit protein uS15 (89 aa).

The protein belongs to the universal ribosomal protein uS15 family. In terms of assembly, part of the 30S ribosomal subunit. Forms a bridge to the 50S subunit in the 70S ribosome, contacting the 23S rRNA.

In terms of biological role, one of the primary rRNA binding proteins, it binds directly to 16S rRNA where it helps nucleate assembly of the platform of the 30S subunit by binding and bridging several RNA helices of the 16S rRNA. Forms an intersubunit bridge (bridge B4) with the 23S rRNA of the 50S subunit in the ribosome. The polypeptide is Small ribosomal subunit protein uS15 (Beutenbergia cavernae (strain ATCC BAA-8 / DSM 12333 / CCUG 43141 / JCM 11478 / NBRC 16432 / NCIMB 13614 / HKI 0122)).